We begin with the raw amino-acid sequence, 344 residues long: GTPase Obg (344 aa).

The Obg domain occupies 1 to 159 (MKFLDLAKVY…RTIWLRLKLI (159 aa)). The OBG-type G domain occupies 160 to 327 (ADVGLLGLPN…VLRALRARID (168 aa)). Residues 166–173 (GLPNAGKS), 191–195 (FTTLH), 212–215 (DIPG), 279–282 (NKID), and 308–310 (SGA) each bind GTP. 2 residues coordinate Mg(2+): S173 and T193.

Belongs to the TRAFAC class OBG-HflX-like GTPase superfamily. OBG GTPase family. Monomer. Mg(2+) serves as cofactor.

Its subcellular location is the cytoplasm. In terms of biological role, an essential GTPase which binds GTP, GDP and possibly (p)ppGpp with moderate affinity, with high nucleotide exchange rates and a fairly low GTP hydrolysis rate. Plays a role in control of the cell cycle, stress response, ribosome biogenesis and in those bacteria that undergo differentiation, in morphogenesis control. The sequence is that of GTPase Obg from Ruegeria pomeroyi (strain ATCC 700808 / DSM 15171 / DSS-3) (Silicibacter pomeroyi).